Here is a 456-residue protein sequence, read N- to C-terminus: tRNA modification GTPase MnmE (456 aa).

3 residues coordinate (6S)-5-formyl-5,6,7,8-tetrahydrofolate: arginine 25, glutamate 87, and arginine 126. Residues 221–377 (GLKVAIVGQP…LENAIIEQVN (157 aa)) enclose the TrmE-type G domain. Asparagine 231 contacts K(+). Residues 231–236 (NVGKSS), 250–256 (TDLPGTT), and 275–278 (DTAG) each bind GTP. Serine 235 lines the Mg(2+) pocket. 3 residues coordinate K(+): threonine 250, leucine 252, and threonine 255. A Mg(2+)-binding site is contributed by threonine 256. Lysine 456 lines the (6S)-5-formyl-5,6,7,8-tetrahydrofolate pocket.

It belongs to the TRAFAC class TrmE-Era-EngA-EngB-Septin-like GTPase superfamily. TrmE GTPase family. In terms of assembly, homodimer. Heterotetramer of two MnmE and two MnmG subunits. It depends on K(+) as a cofactor.

The protein localises to the cytoplasm. Functionally, exhibits a very high intrinsic GTPase hydrolysis rate. Involved in the addition of a carboxymethylaminomethyl (cmnm) group at the wobble position (U34) of certain tRNAs, forming tRNA-cmnm(5)s(2)U34. The sequence is that of tRNA modification GTPase MnmE from Synechocystis sp. (strain ATCC 27184 / PCC 6803 / Kazusa).